The chain runs to 248 residues: ATP synthase subunit a, chloroplastic (248 aa).

5 helical membrane-spanning segments follow: residues 37-57, 96-116, 135-155, 200-220, and 221-241; these read GQVL…AFLG, VPFV…GALV, INTT…AGFH, LVVA…MMFL, and GLFT…AYIG.

Belongs to the ATPase A chain family. In terms of assembly, F-type ATPases have 2 components, CF(1) - the catalytic core - and CF(0) - the membrane proton channel. CF(1) has five subunits: alpha(3), beta(3), gamma(1), delta(1), epsilon(1). CF(0) has four main subunits: a, b, b' and c.

It localises to the plastid. The protein localises to the chloroplast thylakoid membrane. Key component of the proton channel; it plays a direct role in the translocation of protons across the membrane. The sequence is that of ATP synthase subunit a, chloroplastic from Staurastrum punctulatum (Green alga).